The primary structure comprises 793 residues: Tripartite terminase subunit 1 (793 aa).

The segment at Cys-206–His-234 adopts a C3H1-type zinc-finger fold. An ATP-binding site is contributed by Phe-697–Gly-704.

Belongs to the herpesviridae TRM1 protein family. As to quaternary structure, associates with TRM2 and TRM3 to form the tripartite terminase complex. Interacts with portal protein.

It localises to the host nucleus. Component of the molecular motor that translocates viral genomic DNA in empty capsid during DNA packaging. Forms a tripartite terminase complex together with TRM2 and TRM3 in the host cytoplasm. Once the complex reaches the host nucleus, it interacts with the capsid portal vertex. This portal forms a ring in which genomic DNA is translocated into the capsid. TRM1 carries an endonuclease activity that plays an important role for the cleavage of concatemeric viral DNA into unit length genomes. The sequence is that of Tripartite terminase subunit 1 from Gallid herpesvirus 2 (strain Chicken/Md5/ATCC VR-987) (GaHV-2).